The sequence spans 283 residues: Elongation factor Ts (283 aa).

The segment at threonine 80 to valine 83 is involved in Mg(2+) ion dislocation from EF-Tu.

This sequence belongs to the EF-Ts family.

The protein resides in the cytoplasm. In terms of biological role, associates with the EF-Tu.GDP complex and induces the exchange of GDP to GTP. It remains bound to the aminoacyl-tRNA.EF-Tu.GTP complex up to the GTP hydrolysis stage on the ribosome. In Haemophilus influenzae (strain PittEE), this protein is Elongation factor Ts.